The sequence spans 253 residues: Ribosomal RNA small subunit methyltransferase A (253 aa).

S-adenosyl-L-methionine-binding residues include histidine 12, leucine 14, glycine 39, glutamate 60, aspartate 81, and asparagine 104.

This sequence belongs to the class I-like SAM-binding methyltransferase superfamily. rRNA adenine N(6)-methyltransferase family. RsmA subfamily.

The protein localises to the cytoplasm. It carries out the reaction adenosine(1518)/adenosine(1519) in 16S rRNA + 4 S-adenosyl-L-methionine = N(6)-dimethyladenosine(1518)/N(6)-dimethyladenosine(1519) in 16S rRNA + 4 S-adenosyl-L-homocysteine + 4 H(+). Functionally, specifically dimethylates two adjacent adenosines (A1518 and A1519) in the loop of a conserved hairpin near the 3'-end of 16S rRNA in the 30S particle. May play a critical role in biogenesis of 30S subunits. The protein is Ribosomal RNA small subunit methyltransferase A of Acidovorax ebreus (strain TPSY) (Diaphorobacter sp. (strain TPSY)).